Here is a 381-residue protein sequence, read N- to C-terminus: Chaperone protein DnaJ (381 aa).

The J domain maps to 5–70 (DYYEVLGLQK…QKRAAYDQYG (66 aa)). Residues 133 to 211 (GTTKDIQINT…CHGEGRVHKK (79 aa)) form a CR-type zinc finger. Residues Cys-146, Cys-149, Cys-163, Cys-166, Cys-185, Cys-188, Cys-199, and Cys-202 each coordinate Zn(2+). CXXCXGXG motif repeat units lie at residues 146 to 153 (CDSCGGSG), 163 to 170 (CPHCHGSG), 185 to 192 (CPTCHGSG), and 199 to 206 (CRSCHGEG).

The protein belongs to the DnaJ family. In terms of assembly, homodimer. It depends on Zn(2+) as a cofactor.

It is found in the cytoplasm. Participates actively in the response to hyperosmotic and heat shock by preventing the aggregation of stress-denatured proteins and by disaggregating proteins, also in an autonomous, DnaK-independent fashion. Unfolded proteins bind initially to DnaJ; upon interaction with the DnaJ-bound protein, DnaK hydrolyzes its bound ATP, resulting in the formation of a stable complex. GrpE releases ADP from DnaK; ATP binding to DnaK triggers the release of the substrate protein, thus completing the reaction cycle. Several rounds of ATP-dependent interactions between DnaJ, DnaK and GrpE are required for fully efficient folding. Also involved, together with DnaK and GrpE, in the DNA replication of plasmids through activation of initiation proteins. The chain is Chaperone protein DnaJ from Haemophilus influenzae (strain 86-028NP).